The primary structure comprises 195 residues: uncharacterized protein (195 aa).

Helical transmembrane passes span Val13–Ala32 and Leu42–Val64.

Its subcellular location is the cell membrane. This is an uncharacterized protein from Archaeoglobus fulgidus (strain ATCC 49558 / DSM 4304 / JCM 9628 / NBRC 100126 / VC-16).